The following is a 245-amino-acid chain: Uridylate kinase (245 aa).

An ATP-binding site is contributed by Lys-20–Gly-23. Gly-60 contributes to the UMP binding site. Positions 61 and 65 each coordinate ATP. UMP-binding positions include Asp-80 and Ala-141–Thr-148. Residues Tyr-175 and Asp-178 each contribute to the ATP site.

This sequence belongs to the UMP kinase family. Homohexamer.

The protein localises to the cytoplasm. It carries out the reaction UMP + ATP = UDP + ADP. The protein operates within pyrimidine metabolism; CTP biosynthesis via de novo pathway; UDP from UMP (UMPK route): step 1/1. Inhibited by UTP. Its function is as follows. Catalyzes the reversible phosphorylation of UMP to UDP. In Arthrobacter sp. (strain FB24), this protein is Uridylate kinase.